Reading from the N-terminus, the 1641-residue chain is Ophiophagus venom factor (1641 aa).

Positions 1-22 (MEGMALYLVAALLIGFPGSSHG) are cleaved as a signal peptide. 2 N-linked (GlcNAc...) asparagine glycosylation sites follow: Asn181 and Asn209. Positions 507, 530, 531, and 533 each coordinate Mg(2+). Cystine bridges form between Cys535–Cys796, Cys604–Cys639, Cys672–Cys699, Cys673–Cys706, Cys686–Cys707, Cys852–Cys1491, Cys1336–Cys1467, Cys1367–Cys1436, Cys1484–Cys1489, Cys1496–Cys1568, Cys1515–Cys1639, and Cys1615–Cys1624. The propeptide occupies 645–728 (RRRRSSVLLL…WESGLFLPRN (84 aa)). Residues 649–727 (SSVLLLDSKA…QWESGLFLPR (79 aa)) form a C3a-like domain region. The 36-residue stretch at 672–707 (CCEDSMHENPMGYTCEKRAKYIQEGDACKAAFLECC) folds into the Anaphylatoxin-like domain. The interval 731–742 (EDGFIQDSDIIP) is factor B binding site. The propeptide occupies 981 to 1259 (HLIITPSGCG…VMLFQALAEY (279 aa)). Positions 981-1259 (HLIITPSGCG…VMLFQALAEY (279 aa)) are C3d-like domain. Positions 989-992 (CGEQ) form a cross-link, isoglutamyl cysteine thioester (Cys-Gln). Residues 1186 to 1249 (VLMAASTGKN…GGTYGQTQAT (64 aa)) form a factor H binding site region. One can recognise an NTR domain in the interval 1496–1639 (CSLLSQQEKI…LSNILTIFGC (144 aa)).

The protein belongs to the venom complement C3 homolog family. Heterotrimer of alpha, beta and gamma chains; disulfide-linked. May be active with factor B in the presence of factor D. Post-translationally, first processed by the removal of 4 Arg residues by furin-type protease, forming two chains, alpha and gamma/beta precursor, linked by a disulfide bond. Probably, a cobrin-like protease cleaves the C3a-like domain and then the C3d-like domain, generating the mature venom factor (OVF). The beta chain is not glycosylated. As to expression, expressed by the venom gland.

It localises to the secreted. Its function is as follows. Complement-activating protein in cobra venom. It is a structural and functional analog of complement component C3b, the activated form of C3. It binds factor B (CFB), which is subsequently cleaved by factor D (CFD) to form the bimolecular complex OVF/Bb. OVF/Bb is a C3/C5 convertase that cleaves both complement components C3 and C5. Structurally, it resembles the C3b degradation product C3c, which is not able to form a C3/C5 convertase. Unlike C3b/Bb, OVF/Bb is a stable complex and completely resistant to the actions of complement regulatory factors H (CFH) and I (CFI). Therefore, OVF continuously activates complement. As a result, OVF exhibits complement-depleting activity. In Ophiophagus hannah (King cobra), this protein is Ophiophagus venom factor.